The following is a 300-amino-acid chain: Ecto-ADP-ribosyltransferase 4 (300 aa).

The first 23 residues, 1–23 (MALWLPGGQLTLLLLLWVQQTPA), serve as a signal peptide directing secretion. At 24–269 (GSTEAPLKVD…QLLKACSKKC (246 aa)) the chain is on the extracellular side. Cystine bridges form between cysteine 48–cysteine 259 and cysteine 161–cysteine 210. The TR mART core domain maps to 70–255 (KYYSRAWQKA…INLRSAGNMS (186 aa)). N-linked (GlcNAc...) asparagine glycans are attached at residues asparagine 110 and asparagine 157. An NAD(+)-binding site is contributed by glutamine 185. A glycan (N-linked (GlcNAc...) asparagine) is linked at asparagine 201. An NAD(+)-binding site is contributed by serine 219. Asparagine 253 carries an N-linked (GlcNAc...) asparagine glycan. Residue alanine 264 is the site of GPI-anchor amidated alanine attachment. The propeptide at 265–300 (CSKKCAPAPVVIGCLFLVTVVISSKSRAQRNLLAPF) is removed in mature form. Residues 270 to 286 (APAPVVIGCLFLVTVVI) traverse the membrane as a helical segment. Residues 287 to 300 (SSKSRAQRNLLAPF) lie on the Cytoplasmic side of the membrane.

The protein belongs to the Arg-specific ADP-ribosyltransferase family.

The protein localises to the membrane. It localises to the cell membrane. The enzyme catalyses L-arginyl-[protein] + NAD(+) = N(omega)-(ADP-D-ribosyl)-L-arginyl-[protein] + nicotinamide + H(+). This chain is Ecto-ADP-ribosyltransferase 4 (Art4), found in Mus musculus (Mouse).